The chain runs to 138 residues: Cysteine desulfuration protein SufE (138 aa).

Cys-51 acts as the Cysteine persulfide intermediate in catalysis.

It belongs to the SufE family. Homodimer. Interacts with SufS.

The protein localises to the cytoplasm. Its pathway is cofactor biosynthesis; iron-sulfur cluster biosynthesis. Participates in cysteine desulfuration mediated by SufS. Cysteine desulfuration mobilizes sulfur from L-cysteine to yield L-alanine and constitutes an essential step in sulfur metabolism for biosynthesis of a variety of sulfur-containing biomolecules. Functions as a sulfur acceptor for SufS, by mediating the direct transfer of the sulfur atom from the S-sulfanylcysteine of SufS, an intermediate product of cysteine desulfuration process. In Klebsiella pneumoniae (strain 342), this protein is Cysteine desulfuration protein SufE.